Here is a 293-residue protein sequence, read N- to C-terminus: Protein Pat (293 aa).

The BEN domain maps to 187–287 (LPDIILNPLD…LLLRTRQDRA (101 aa)).

In terms of assembly, interacts with poc1b. In terms of tissue distribution, an mRNA and protein component of germ plasm and primordial germ cells (PGCs) throughout oogenesis and early development, being first localized to the granulo-fibrillar material (GFM) of the mitochondrial cloud in stage I and II oocytes and to the periphery of mature germinal granules both in oocytes and in embryos. Shows some somatic expression including the ectodermal cells of tailbud embryos. In adults, only expressed in ovaries.

The protein localises to the cytoplasm. Its subcellular location is the nucleus. In terms of biological role, probably plays a role in germ plasm formation, positioning and maintenance. In Xenopus laevis (African clawed frog), this protein is Protein Pat.